We begin with the raw amino-acid sequence, 528 residues long: Putative ABC transporter ATP-binding protein MA_1418 (528 aa).

ABC transporter domains are found at residues 2-242 (IELR…TNLT) and 262-494 (ISVK…SDYK). ATP contacts are provided by residues 36–43 (GHSAAGKT) and 294–301 (GENGSGKT).

The protein belongs to the ABC transporter superfamily.

The protein resides in the cell membrane. Its function is as follows. Probably part of an ABC transporter complex. Responsible for energy coupling to the transport system. The sequence is that of Putative ABC transporter ATP-binding protein MA_1418 from Methanosarcina acetivorans (strain ATCC 35395 / DSM 2834 / JCM 12185 / C2A).